Reading from the N-terminus, the 235-residue chain is LexA repressor (235 aa).

Positions 26 to 46 (FDEMKEALDLASKSGIHRLIT) form a DNA-binding region, H-T-H motif. The interval 72-104 (QATTAAPPKGRGAFRPQVLEGGGQAPTTSAQPQ) is disordered. Active-site for autocatalytic cleavage activity residues include Ser156 and Lys193.

The protein belongs to the peptidase S24 family. In terms of assembly, homodimer.

The enzyme catalyses Hydrolysis of Ala-|-Gly bond in repressor LexA.. Its function is as follows. Represses a number of genes involved in the response to DNA damage (SOS response), including recA and lexA. In the presence of single-stranded DNA, RecA interacts with LexA causing an autocatalytic cleavage which disrupts the DNA-binding part of LexA, leading to derepression of the SOS regulon and eventually DNA repair. The protein is LexA repressor of Caulobacter sp. (strain K31).